The primary structure comprises 331 residues: Ribosomal RNA small subunit methyltransferase H (331 aa).

S-adenosyl-L-methionine contacts are provided by residues 49–51, Asp68, Leu102, Asp116, and Gln123; that span reads GGH.

It belongs to the methyltransferase superfamily. RsmH family.

The protein resides in the cytoplasm. The enzyme catalyses cytidine(1402) in 16S rRNA + S-adenosyl-L-methionine = N(4)-methylcytidine(1402) in 16S rRNA + S-adenosyl-L-homocysteine + H(+). Functionally, specifically methylates the N4 position of cytidine in position 1402 (C1402) of 16S rRNA. The sequence is that of Ribosomal RNA small subunit methyltransferase H from Renibacterium salmoninarum (strain ATCC 33209 / DSM 20767 / JCM 11484 / NBRC 15589 / NCIMB 2235).